A 504-amino-acid polypeptide reads, in one-letter code: 6,7,8-trihydroxycoumarin synthase (504 aa).

A helical transmembrane segment spans residues 1 to 21 (MEPVFLFLILAFPIASVYLLF). The tract at residues 363–368 (PAPVLV) is substrate specificity. Residue Cys444 coordinates heme.

It belongs to the cytochrome P450 family. It depends on heme as a cofactor.

Its subcellular location is the microsome membrane. It functions in the pathway secondary metabolite biosynthesis. Involved in the biosynthesis of coumarins and furanocoumarins (FCs), natural products required for defense responses against attacks by predators with potential medical and agroindustrial usages such as anticoagulant, rodenticide and artificial vanilla substitutes. Able to catalyze the hydroxylation of esculetin to produce 6,7,8-trihydroxycoumarin. In Pastinaca sativa (Wild parsnip), this protein is 6,7,8-trihydroxycoumarin synthase.